A 199-amino-acid polypeptide reads, in one-letter code: 3-isopropylmalate dehydratase small subunit (199 aa).

Belongs to the LeuD family. LeuD type 1 subfamily. Heterodimer of LeuC and LeuD.

It catalyses the reaction (2R,3S)-3-isopropylmalate = (2S)-2-isopropylmalate. Its pathway is amino-acid biosynthesis; L-leucine biosynthesis; L-leucine from 3-methyl-2-oxobutanoate: step 2/4. Its function is as follows. Catalyzes the isomerization between 2-isopropylmalate and 3-isopropylmalate, via the formation of 2-isopropylmaleate. The chain is 3-isopropylmalate dehydratase small subunit from Pseudoalteromonas translucida (strain TAC 125).